A 203-amino-acid polypeptide reads, in one-letter code: Dual-action ribosomal maturation protein DarP (203 aa).

Disordered regions lie at residues 1 to 31 (MRPM…SKSQ) and 183 to 203 (GASD…DDEA). The segment covering 186-203 (DSDDEAAGDAGDDHDDEA) has biased composition (acidic residues).

The protein belongs to the DarP family.

Its subcellular location is the cytoplasm. Its function is as follows. Member of a network of 50S ribosomal subunit biogenesis factors which assembles along the 30S-50S interface, preventing incorrect 23S rRNA structures from forming. Promotes peptidyl transferase center (PTC) maturation. The sequence is that of Dual-action ribosomal maturation protein DarP from Burkholderia cenocepacia (strain ATCC BAA-245 / DSM 16553 / LMG 16656 / NCTC 13227 / J2315 / CF5610) (Burkholderia cepacia (strain J2315)).